Consider the following 193-residue polypeptide: NADH-quinone oxidoreductase subunit B (193 aa).

4 residues coordinate [4Fe-4S] cluster: C72, C73, C137, and C167.

This sequence belongs to the complex I 20 kDa subunit family. In terms of assembly, NDH-1 is composed of 14 different subunits. Subunits NuoB, C, D, E, F, and G constitute the peripheral sector of the complex. Requires [4Fe-4S] cluster as cofactor.

The protein localises to the cell inner membrane. It catalyses the reaction a quinone + NADH + 5 H(+)(in) = a quinol + NAD(+) + 4 H(+)(out). Functionally, NDH-1 shuttles electrons from NADH, via FMN and iron-sulfur (Fe-S) centers, to quinones in the respiratory chain. The immediate electron acceptor for the enzyme in this species is believed to be ubiquinone. Couples the redox reaction to proton translocation (for every two electrons transferred, four hydrogen ions are translocated across the cytoplasmic membrane), and thus conserves the redox energy in a proton gradient. In Bartonella quintana (strain Toulouse) (Rochalimaea quintana), this protein is NADH-quinone oxidoreductase subunit B.